We begin with the raw amino-acid sequence, 343 residues long: Ketol-acid reductoisomerase (NADP(+)) (343 aa).

In terms of domain architecture, KARI N-terminal Rossmann spans 7–186; that stretch reads TTVYYDEDAD…GCTRAGVIET (180 aa). Residues 30–33, arginine 53, serine 56, serine 58, and 88–91 each bind NADP(+); these read YGSQ and DTIQ. The active site involves histidine 112. Glycine 138 is a binding site for NADP(+). A KARI C-terminal knotted domain is found at 187–329; that stretch reads SFQEEVETDL…ENLRELFAWG (143 aa). Positions 195, 199, 231, and 235 each coordinate Mg(2+). A substrate-binding site is contributed by serine 256.

The protein belongs to the ketol-acid reductoisomerase family. Requires Mg(2+) as cofactor.

It carries out the reaction (2R)-2,3-dihydroxy-3-methylbutanoate + NADP(+) = (2S)-2-acetolactate + NADPH + H(+). The catalysed reaction is (2R,3R)-2,3-dihydroxy-3-methylpentanoate + NADP(+) = (S)-2-ethyl-2-hydroxy-3-oxobutanoate + NADPH + H(+). Its pathway is amino-acid biosynthesis; L-isoleucine biosynthesis; L-isoleucine from 2-oxobutanoate: step 2/4. It functions in the pathway amino-acid biosynthesis; L-valine biosynthesis; L-valine from pyruvate: step 2/4. Involved in the biosynthesis of branched-chain amino acids (BCAA). Catalyzes an alkyl-migration followed by a ketol-acid reduction of (S)-2-acetolactate (S2AL) to yield (R)-2,3-dihydroxy-isovalerate. In the isomerase reaction, S2AL is rearranged via a Mg-dependent methyl migration to produce 3-hydroxy-3-methyl-2-ketobutyrate (HMKB). In the reductase reaction, this 2-ketoacid undergoes a metal-dependent reduction by NADPH to yield (R)-2,3-dihydroxy-isovalerate. In Haloarcula marismortui (strain ATCC 43049 / DSM 3752 / JCM 8966 / VKM B-1809) (Halobacterium marismortui), this protein is Ketol-acid reductoisomerase (NADP(+)).